The chain runs to 402 residues: MRLLHVVVATVSLTGAITSLIAAQHYNVSSDVIGGIEKEDFGVGCNSRTKYPTAADTSKLQPRFAYLITNSLADFIAVHFIKFNLPDNDFVQIRAADPSAVDNRVLRYRGNESNGVFFADALSTKSVIVELFTNASSSAQKTNSSKCVGFAVDSYQYLGEGSTLNGSKEEVCGADNSREASCYSGYTNAFRASNAVVRLLIKKSTGSFFCTGWLIGSEGHLITNNHCISTQSHASNTEFEFMAQGSSCSINCEGARACFGSIRASYATLIYADATLDYALVKLPINLSGQYGYLRLRSSGAVMNERVYVPQHPAGWGKRIAMKSDNGFGTVTSLTMGGCAPNQVAYYLDTQGGSSGSPVLSWSDNAVVALHHCGGCPNTAINSYKLVNDMKWRGILPANACT.

The N-terminal stretch at 1–23 (MRLLHVVVATVSLTGAITSLIAA) is a signal peptide. An N-linked (GlcNAc...) asparagine glycan is attached at Asn27. The short motif at 104–107 (RVLR) is the RxLR element. Residues Asn111, Asn134, Asn143, Asn165, and Asn286 are each glycosylated (N-linked (GlcNAc...) asparagine).

The protein belongs to the RxLR effector family.

It localises to the secreted. The protein resides in the host cell. Functionally, secreted effector that completely suppresses the host cell death induced by cell death-inducing proteins. This Plasmopara viticola (Downy mildew of grapevine) protein is Secreted RxLR effector protein 73.